Reading from the N-terminus, the 159-residue chain is 2-C-methyl-D-erythritol 2,4-cyclodiphosphate synthase (159 aa).

Residues Asp-10 and His-12 each coordinate a divalent metal cation. Residues 10–12 and 36–37 contribute to the 4-CDP-2-C-methyl-D-erythritol 2-phosphate site; these read DVH and HS. His-44 lines the a divalent metal cation pocket. 4-CDP-2-C-methyl-D-erythritol 2-phosphate contacts are provided by residues 58–60, 63–67, 102–108, 134–137, Phe-141, and Arg-144; these read DIG, FPDTD, AQAPKMA, and TTTE.

Belongs to the IspF family. Homotrimer. The cofactor is a divalent metal cation.

The enzyme catalyses 4-CDP-2-C-methyl-D-erythritol 2-phosphate = 2-C-methyl-D-erythritol 2,4-cyclic diphosphate + CMP. The protein operates within isoprenoid biosynthesis; isopentenyl diphosphate biosynthesis via DXP pathway; isopentenyl diphosphate from 1-deoxy-D-xylulose 5-phosphate: step 4/6. Functionally, involved in the biosynthesis of isopentenyl diphosphate (IPP) and dimethylallyl diphosphate (DMAPP), two major building blocks of isoprenoid compounds. Catalyzes the conversion of 4-diphosphocytidyl-2-C-methyl-D-erythritol 2-phosphate (CDP-ME2P) to 2-C-methyl-D-erythritol 2,4-cyclodiphosphate (ME-CPP) with a corresponding release of cytidine 5-monophosphate (CMP). This is 2-C-methyl-D-erythritol 2,4-cyclodiphosphate synthase from Shewanella frigidimarina (strain NCIMB 400).